Reading from the N-terminus, the 226-residue chain is Large ribosomal subunit protein uL1 (226 aa).

Belongs to the universal ribosomal protein uL1 family. Part of the 50S ribosomal subunit.

Binds directly to 23S rRNA. The L1 stalk is quite mobile in the ribosome, and is involved in E site tRNA release. Functionally, protein L1 is also a translational repressor protein, it controls the translation of the L11 operon by binding to its mRNA. This Borrelia garinii subsp. bavariensis (strain ATCC BAA-2496 / DSM 23469 / PBi) (Borreliella bavariensis) protein is Large ribosomal subunit protein uL1.